A 497-amino-acid polypeptide reads, in one-letter code: Probable cytosol aminopeptidase (497 aa).

Mn(2+)-binding residues include Lys-263 and Asp-268. Lys-275 is a catalytic residue. Positions 286, 345, and 347 each coordinate Mn(2+). The active site involves Arg-349.

Belongs to the peptidase M17 family. Requires Mn(2+) as cofactor.

The protein resides in the cytoplasm. The catalysed reaction is Release of an N-terminal amino acid, Xaa-|-Yaa-, in which Xaa is preferably Leu, but may be other amino acids including Pro although not Arg or Lys, and Yaa may be Pro. Amino acid amides and methyl esters are also readily hydrolyzed, but rates on arylamides are exceedingly low.. It carries out the reaction Release of an N-terminal amino acid, preferentially leucine, but not glutamic or aspartic acids.. Its function is as follows. Presumably involved in the processing and regular turnover of intracellular proteins. Catalyzes the removal of unsubstituted N-terminal amino acids from various peptides. The chain is Probable cytosol aminopeptidase from Sinorhizobium fredii (strain NBRC 101917 / NGR234).